A 545-amino-acid chain; its full sequence is Threonine--tRNA ligase catalytic subunit (545 aa).

The segment at 139-433 (DHRLIGEKLD…LLEHFKGKLP (295 aa)) is catalytic. The Zn(2+) site is built by Cys231, His282, and His410.

It belongs to the class-II aminoacyl-tRNA synthetase family. In terms of assembly, homodimer. Probably interacts with its editing subunit. The cofactor is Zn(2+).

The protein resides in the cytoplasm. The enzyme catalyses tRNA(Thr) + L-threonine + ATP = L-threonyl-tRNA(Thr) + AMP + diphosphate + H(+). In terms of biological role, catalyzes the attachment of threonine to tRNA(Thr) in a two-step reaction: L-threonine is first activated by ATP to form Thr-AMP and then transferred to the acceptor end of tRNA(Thr). Also activates L-serine and transfers it to tRNA(Thr) but cannot deacylate incorrectly charged amino acid; unlike most archaea the editing function is found in a freestanding protein. The protein is Threonine--tRNA ligase catalytic subunit of Saccharolobus islandicus (strain M.16.4 / Kamchatka #3) (Sulfolobus islandicus).